A 291-amino-acid polypeptide reads, in one-letter code: Bis(5'-nucleosyl)-tetraphosphatase, symmetrical (291 aa).

It belongs to the Ap4A hydrolase family.

It carries out the reaction P(1),P(4)-bis(5'-adenosyl) tetraphosphate + H2O = 2 ADP + 2 H(+). Its function is as follows. Hydrolyzes diadenosine 5',5'''-P1,P4-tetraphosphate to yield ADP. The polypeptide is Bis(5'-nucleosyl)-tetraphosphatase, symmetrical (Coxiella burnetii (strain CbuG_Q212) (Coxiella burnetii (strain Q212))).